A 238-amino-acid chain; its full sequence is Sugar fermentation stimulation protein homolog (238 aa).

It belongs to the SfsA family.

This is Sugar fermentation stimulation protein homolog from Actinobacillus succinogenes (strain ATCC 55618 / DSM 22257 / CCUG 43843 / 130Z).